A 308-amino-acid chain; its full sequence is MGGGRWAAAGALLALAAGLLAAGSASEYDYVSFQSDIGAYQSGRFYTKPPQCVDIPADLRLCHNVGYKRMVLPNLLEHETMAEVKQQASSWVPLLNKNCHIGTQVFLCSLFAPVCLDRPIYPCRWLCEAVRDSCEPVMQFFGFYWPEMLKCDKFPEGDVCIAMTPPNATEASKPQGTTVCPPCDNELKSEAIIEHLCASEFALRMKIKEVKKENGDKKIVPKKKKPLKLGPIKKKELKKLVLYLKNGADCPCHQLDNLSHHFLIMGRKVKSQYLLTAIHKWDKKNKEFKTFMKKMKNHECPTFQSVFK.

Residues 1-25 form the signal peptide; the sequence is MGGGRWAAAGALLALAAGLLAAGSA. Residues 47-163 form the FZ domain; sequence TKPPQCVDIP…FPEGDVCIAM (117 aa). 5 cysteine pairs are disulfide-bonded: cysteine 52-cysteine 115, cysteine 62-cysteine 108, cysteine 99-cysteine 134, cysteine 123-cysteine 160, and cysteine 127-cysteine 151. Asparagine 167 carries N-linked (GlcNAc...) asparagine glycosylation. 3 disulfides stabilise this stretch: cysteine 180–cysteine 250, cysteine 183–cysteine 252, and cysteine 197–cysteine 300. One can recognise an NTR domain in the interval 180–300; it reads CPPCDNELKS…FMKKMKNHEC (121 aa).

It belongs to the secreted frizzled-related protein (sFRP) family. Interacts with WNT1, WNT2, WNT4, WNT8, MYOC and FRZD6. As to expression, highest levels in aortic endothelium, heart, spleen and eye. Lower levels in lung, brain and kidney. Weak expression in liver, skeletal muscle and the medial layer of the aorta. In the cortical brain, localized to neurons and small blood vessels. In the retina, localized to the inner and outer nuclear layers with high expression in the neuronal cell bodies. In the heart, restricted to myocytes. In lung, highest expression found in the epithelium of terminal bronchioles. In kidney, localized to the epithelium of collecting ducts of the medulla and, in spleen, expression restricted to the red pulp in cells associated with the sinuses.

The protein localises to the secreted. In terms of biological role, soluble frizzled-related proteins (sFRPS) function as modulators of Wnt signaling through direct interaction with Wnts. They have a role in regulating cell growth and differentiation in specific cell types. SFRP1 decreases intracellular beta-catenin levels. Has antiproliferative effects on vascular cells, in vitro and in vivo, and can induce, in vivo, an angiogenic response. In vascular cell cycle, delays the G1 phase and entry into the S phase. In kidney development, inhibits tubule formation and bud growth in metanephroi. Inhibits WNT1/WNT4-mediated TCF-dependent transcription. In Bos taurus (Bovine), this protein is Secreted frizzled-related protein 1 (SFRP1).